The primary structure comprises 443 residues: Trigger factor (443 aa).

The 86-residue stretch at 165–250 (GDQIVMDFLG…VKEVKKPVPA (86 aa)) folds into the PPIase FKBP-type domain.

The protein belongs to the FKBP-type PPIase family. Tig subfamily.

It localises to the cytoplasm. The catalysed reaction is [protein]-peptidylproline (omega=180) = [protein]-peptidylproline (omega=0). In terms of biological role, involved in protein export. Acts as a chaperone by maintaining the newly synthesized protein in an open conformation. Functions as a peptidyl-prolyl cis-trans isomerase. The sequence is that of Trigger factor from Roseobacter denitrificans (strain ATCC 33942 / OCh 114) (Erythrobacter sp. (strain OCh 114)).